We begin with the raw amino-acid sequence, 223 residues long: Neurotrophic factor BDNF precursor form (223 aa).

An N-terminal signal peptide occupies residues 1 to 5 (SCMKA). The propeptide occupies 6–114 (APMKEVSIRG…AANMSMRVRR (109 aa)). Asn107 carries N-linked (GlcNAc...) asparagine glycosylation. 2 disulfide bridges follow: Cys127-Cys194 and Cys172-Cys223.

This sequence belongs to the NGF-beta family.

It localises to the secreted. In terms of biological role, promotes the survival of neuronal populations that are all located either in the central nervous system or directly connected to it. This is Neurotrophic factor BDNF precursor form (BDNF) from Calabaria reinhardtii (Calabar boa).